Here is a 160-residue protein sequence, read N- to C-terminus: Thebaine synthase 2 (160 aa).

Ser74 provides a ligand contact to thebaine. His89 serves as the catalytic Proton acceptor. Residue Thr105 participates in thebaine binding.

It belongs to the MLP family. As to quaternary structure, homodimer (allosteric) and oligomers. Expressed in poppy latex.

The enzyme catalyses (7S)-O-acetylsalutaridinol = thebaine + acetate + H(+). It functions in the pathway alkaloid biosynthesis; morphine biosynthesis. With respect to regulation, slightly inhibited by salutaridine and (7S)-salutaridinol. Catalyzes the formation of thebaine from (7S)-salutaridinol 7-O-acetate at the expense of labile hydroxylated by-products, which are preferentially produced by spontaneous allylic elimination. No visible activity toward (7S)-salutaridinol (at pH 7). The sequence is that of Thebaine synthase 2 from Papaver somniferum (Opium poppy).